The chain runs to 117 residues: Big defensin (117 aa).

The N-terminal stretch at 1–23 (MKGNIGIAVFYMLLLLLPTDSIG) is a signal peptide. Positions 26-36 (MEEEQEKLFRQ) are excised as a propeptide. 3 disulfide bridges follow: Cys-83-Cys-113, Cys-90-Cys-108, and Cys-94-Cys-114.

The protein belongs to the big defensin family. Interacts with intracellular coagulation inhibitor 1/LICI-1. In terms of tissue distribution, expressed in all tissues examined, including hemocytes, heart, hepatopancreas, stomach, intestine and skeletal muscle.

The protein resides in the secreted. Its function is as follows. Significantly inhibits the growth of Gram-negative and Gram-positive bacteria and fungi in vitro. This chain is Big defensin, found in Tachypleus tridentatus (Japanese horseshoe crab).